The chain runs to 136 residues: Small ribosomal subunit protein uS9 (136 aa).

A disordered region spans residues 97–136 (SPDNRKPLKTEGHLSRDPRAKERRKYGLKKARKAPQFSKR). The span at 98–116 (PDNRKPLKTEGHLSRDPRA) shows a compositional bias: basic and acidic residues. Basic residues predominate over residues 117-136 (KERRKYGLKKARKAPQFSKR).

The protein belongs to the universal ribosomal protein uS9 family.

In Prochlorococcus marinus (strain MIT 9215), this protein is Small ribosomal subunit protein uS9.